Reading from the N-terminus, the 432-residue chain is Trigger factor (432 aa).

A PPIase FKBP-type domain is found at 161-246; it reads GTRATINFVG…VVKVEARELP (86 aa).

It belongs to the FKBP-type PPIase family. Tig subfamily.

The protein localises to the cytoplasm. The catalysed reaction is [protein]-peptidylproline (omega=180) = [protein]-peptidylproline (omega=0). Involved in protein export. Acts as a chaperone by maintaining the newly synthesized protein in an open conformation. Functions as a peptidyl-prolyl cis-trans isomerase. This is Trigger factor from Aliivibrio salmonicida (strain LFI1238) (Vibrio salmonicida (strain LFI1238)).